The primary structure comprises 426 residues: MDTIAIPALNRPVDATVEIPGSKSITNRALLVAALAQGDSTLENALFSEDSEYFAKCVEQLGIPITLNPHLAQIQVSGKGGDIPAKQADLFVGLAGTAARFITALVALGNGEYRLDGVPRMRERPMGDLVTVLQNSGIKINFEGNSGFMPYTIYGQQFAGGHFRLKANQTSQQLSALLMIAPYAQQDTTIEVEGTLVSQSYVKMTCRLMADFGVDVTQTDDNQFHIKAGQRYQARHYTIEPDASNASYFFAAAAVTGGRVRVNHLTKQSCQGDILWLNVLEQMGCQVLEGEDYTEVIGPEQLQGIDVDMNDMSDLVQTLGAIAPYANSPVIIRNVEHIRYKETERIRAVVTELRRLGVKVEEFADGMKIEPTPINPAAIETYHDHRMAMAFAVTGLKTPGIVIQDPGCTAKTFPDYFTRFFKMIGQ.

3-phosphoshikimate is bound by residues Lys-23, Ser-24, and Arg-28. Lys-23 contacts phosphoenolpyruvate. The phosphoenolpyruvate site is built by Gly-96 and Arg-124. 3-phosphoshikimate is bound by residues Thr-170, Ser-171, Gln-172, Ser-198, Asp-314, and Lys-341. Gln-172 is a phosphoenolpyruvate binding site. Asp-314 (proton acceptor) is an active-site residue. The phosphoenolpyruvate site is built by Arg-345, Arg-386, and Lys-411.

It belongs to the EPSP synthase family. As to quaternary structure, monomer.

Its subcellular location is the cytoplasm. It carries out the reaction 3-phosphoshikimate + phosphoenolpyruvate = 5-O-(1-carboxyvinyl)-3-phosphoshikimate + phosphate. It functions in the pathway metabolic intermediate biosynthesis; chorismate biosynthesis; chorismate from D-erythrose 4-phosphate and phosphoenolpyruvate: step 6/7. Catalyzes the transfer of the enolpyruvyl moiety of phosphoenolpyruvate (PEP) to the 5-hydroxyl of shikimate-3-phosphate (S3P) to produce enolpyruvyl shikimate-3-phosphate and inorganic phosphate. This chain is 3-phosphoshikimate 1-carboxyvinyltransferase, found in Trichormus variabilis (strain ATCC 29413 / PCC 7937) (Anabaena variabilis).